We begin with the raw amino-acid sequence, 195 residues long: Pyridoxal 5'-phosphate synthase subunit PdxT (195 aa).

An L-glutamine-binding site is contributed by 46-48; it reads GES. C78 functions as the Nucleophile in the catalytic mechanism. L-glutamine-binding positions include R106 and 134–135; that span reads IR. Residues H170 and E172 each act as charge relay system in the active site.

This sequence belongs to the glutaminase PdxT/SNO family. In terms of assembly, in the presence of PdxS, forms a dodecamer of heterodimers. Only shows activity in the heterodimer.

It carries out the reaction aldehydo-D-ribose 5-phosphate + D-glyceraldehyde 3-phosphate + L-glutamine = pyridoxal 5'-phosphate + L-glutamate + phosphate + 3 H2O + H(+). It catalyses the reaction L-glutamine + H2O = L-glutamate + NH4(+). The protein operates within cofactor biosynthesis; pyridoxal 5'-phosphate biosynthesis. Catalyzes the hydrolysis of glutamine to glutamate and ammonia as part of the biosynthesis of pyridoxal 5'-phosphate. The resulting ammonia molecule is channeled to the active site of PdxS. The polypeptide is Pyridoxal 5'-phosphate synthase subunit PdxT (Pseudothermotoga lettingae (strain ATCC BAA-301 / DSM 14385 / NBRC 107922 / TMO) (Thermotoga lettingae)).